The sequence spans 79 residues: Small ribosomal subunit protein bS18 (79 aa).

The protein belongs to the bacterial ribosomal protein bS18 family. As to quaternary structure, part of the 30S ribosomal subunit. Forms a tight heterodimer with protein bS6.

Its function is as follows. Binds as a heterodimer with protein bS6 to the central domain of the 16S rRNA, where it helps stabilize the platform of the 30S subunit. This Streptococcus agalactiae serotype Ia (strain ATCC 27591 / A909 / CDC SS700) protein is Small ribosomal subunit protein bS18.